The primary structure comprises 252 residues: Intraflagellar transport associated protein 2 (252 aa).

Residues 35–42 (GPPKAGKT) and 118–125 (WDVSGDKK) each bind GTP.

It belongs to the small GTPase superfamily. Rab family. Component of the IFT complex B composed of at least che-2, che-13, dyf-1, dyf-3, dyf-6, dyf-11, dyf-13, ift-20, ift-74, ift-81, ifta-2, osm-1, osm-5 and osm-6. As to expression, ciliated sensory neurons.

It is found in the cytoplasm. It localises to the cytoskeleton. The protein localises to the cilium axoneme. Functionally, component of the intraflagellar transport (IFT) complex B required for transport of proteins in the motile cilium. May be required for ciliary entrance and transport of specific ciliary cargo proteins such as che-3 which are related to motility. Regulates specific signaling activities in the cilia, such as the daf-2/insulin receptor-like transduction pathway. This is Intraflagellar transport associated protein 2 from Caenorhabditis elegans.